Here is a 223-residue protein sequence, read N- to C-terminus: Ras-related protein Rab-21 (223 aa).

An N-acetylalanine modification is found at Ala2. 10 residues coordinate GTP: Gly26, Gly29, Lys30, Thr31, Ser32, Asn43, Asp44, His46, Thr48, and Thr49. Thr31 contributes to the Mg(2+) binding site. Residues 41–54 (KFNDKHITTLQASF) carry the Switch 1 motif. Residues Thr49 and Asp72 each coordinate Mg(2+). The short motif at 74-92 (AGQERFHALGPIYYRDSNG) is the Switch 2 element. The GTP site is built by Gly75, Asn130, Lys131, Asp133, Ala161, and Lys162. 2 S-geranylgeranyl cysteine lipidation sites follow: Cys219 and Cys220. The residue at position 220 (Cys220) is a Cysteine methyl ester. Residues 221 to 223 (SSG) constitute a propeptide, removed in mature form.

Belongs to the small GTPase superfamily. Rab family. In terms of assembly, interacts with the cytoplasmic tail of integrins ITGA1, ITGA2, ITGA5, ITGA6, ITGA11 and ITGB1; this interaction is dependent upon its GDP/GTP cycle. Interacts with ANKRD27. Interacts (active GTP-bound form) with TMED10; the interaction is indirect and regulates TMED10 abundance and localization at the Golgi. Mg(2+) is required as a cofactor.

The protein resides in the endoplasmic reticulum membrane. It localises to the golgi apparatus. It is found in the trans-Golgi network. The protein localises to the golgi apparatus membrane. Its subcellular location is the early endosome membrane. The protein resides in the cytoplasmic vesicle membrane. It localises to the cleavage furrow. It is found in the cell projection. The protein localises to the neuron projection. The catalysed reaction is GTP + H2O = GDP + phosphate + H(+). Its activity is regulated as follows. Regulated by guanine nucleotide exchange factors (GEFs) including ANKRD27 and RABGEF1, which promote the exchange of bound GDP for free GTP. Regulated by GTPase activating proteins (GAPs) which increase the GTP hydrolysis activity. Inhibited by GDP dissociation inhibitors (GDIs). The small GTPases Rab are key regulators of intracellular membrane trafficking, from the formation of transport vesicles to their fusion with membranes. Rabs cycle between an inactive GDP-bound form and an active GTP-bound form that is able to recruit to membranes different sets of downstream effectors directly responsible for vesicle formation, movement, tethering and fusion. RAB21 is involved in membrane trafficking control. Regulates integrin internalization and recycling, but does not influence the traffic of endosomally translocated receptors in general. As a result, may regulate cell adhesion and migration. During the mitosis of adherent cells, controls the endosomal trafficking of integrins which is required for the successful completion of cytokinesis. Involved in neurite growth. Modulates protein levels of the cargo receptors TMED2 and TMED10, and required for appropriate Golgi localization of TMED10. This is Ras-related protein Rab-21 (RAB21) from Canis lupus familiaris (Dog).